The chain runs to 613 residues: UBX domain-containing protein 3 (613 aa).

2 disordered regions span residues 67-223 and 453-472; these read PAAA…PINP and MNEQSERREREEREAIRNQQ. Residues 68 to 82 show a composition bias toward low complexity; it reads AAASGRNAGASSSSR. Over residues 137–149 the composition is skewed to basic residues; the sequence is THHRGAAIPRQKR. The span at 158–169 shows a compositional bias: low complexity; that stretch reads SSSGSSSASFSS. Positions 452-517 form a coiled coil; the sequence is RMNEQSERRE…EEEECVRRQT (66 aa). One can recognise a UBX domain in the interval 531–610; the sequence is PLAEIINVKF…KWPAREQIFV (80 aa). The Interaction with cdc-48 signature appears at 582-584; sequence FPK.

Forms a complex composed of ubxn-3, cdc-48.1, ufd-1 and npl-4.1. Forms a complex composed of ubxn-3, cdc-48.1 and/or cdc-48.2 and substrate cdt-1. Interacts (via FPK motif) with cdc-48.1 (via N-terminus) and cdc-48.2 (via N-terminus). Interacts (via N-terminus) with cdt-1 and ubiquitinated protein substrates; the interaction is cdc-48-independent. May interact with npl-4.1. As to expression, expressed in the germline (at protein level). Expressed in spermatocytes but not in mature sperm (at protein level). Expressed in the spermatheca and nerve cells.

Its subcellular location is the nucleus. The protein localises to the cytoplasm. It localises to the perinuclear region. It is found in the chromosome. Its function is as follows. Ubiquitin-binding protein which acts as an adapter for ATPase cdc-48.1 and/or cdc-48.2, conferring substrate specificity. Together with ubxn-1 and ubxn-2, plays a role in hermaphrodite spermatogenesis probably by promoting the degradation of sex determination terminal factor tra-1. During mitosis, ensures the degradation of DNA licensing factor cdt-1 and the disassembly of the DNA replication CMG helicase complex by promoting the dissociation from chromatin of several of its components including cdc-45 and sld-5. This is UBX domain-containing protein 3 from Caenorhabditis elegans.